The chain runs to 131 residues: Runt-related transcription factor 2 (131 aa).

In terms of domain architecture, Runt spans 1-10 (MRVGVPPQIP). The disordered stretch occupies residues 1–75 (MRVGVPPQIP…SSTRGTGLPV (75 aa)). Arg11 is modified (asymmetric dimethylarginine). Composition is skewed to polar residues over residues 13 to 36 (SLNS…RQAQ) and 43 to 70 (YDQS…STRG).

Heterodimer of an alpha and a beta subunit. The alpha subunit binds DNA as a monomer and through the Runt domain. DNA-binding is increased by heterodimerization. Interacts with XRCC6 (Ku70) and XRCC5 (Ku80). Interacts with CCNB1, KAT6A and KAT6B. Interacts with HIVEP3. Interacts with IFI204. Interaction with SATB2; the interaction results in enhanced DNA binding and transactivation by these transcription factors. Binds to HIPK3. Interacts with FOXO1 (via a C-terminal region); the interaction inhibits RUNX2 transcriptional activity towards BGLAP. This interaction is prevented on insulin or IGF1 stimulation as FOXO1 is exported from the nucleus. Interacts with FOXP3. Interacts with TMEM119. Interacts with OLFM2. Interacts with IPO7; the interaction inhibits RUNX2 nuclear translocation in osteoblasts. Phosphorylated; probably by MAP kinases (MAPK). Phosphorylation by HIPK3 is required for the SPEN/MINT and FGF2 transactivation during osteoblastic differentiation.

The protein localises to the nucleus. The protein resides in the cytoplasm. Transcription factor involved in osteoblastic differentiation and skeletal morphogenesis. Essential for the maturation of osteoblasts and both intramembranous and endochondral ossification. CBF binds to the core site, 5'-PYGPYGGT-3', of a number of enhancers and promoters, including murine leukemia virus, polyomavirus enhancer, T-cell receptor enhancers, osteocalcin, osteopontin, bone sialoprotein, alpha 1(I) collagen, LCK, IL-3 and GM-CSF promoters. Inhibits KAT6B-dependent transcriptional activation. In osteoblasts, supports transcription activation: synergizes with SPEN/MINT to enhance FGFR2-mediated activation of the osteocalcin FGF-responsive element (OCFRE). The protein is Runt-related transcription factor 2 (RUNX2) of Equus caballus (Horse).